We begin with the raw amino-acid sequence, 319 residues long: MTSMENITEVTEFILLGLTDDPNLQVPLLLIFLFIYLVTLIGNGGMMVIIFSDSHLHTPMYFFLSNLSFVDLGYSSAVAPKMVAALQSGNKVISYNGCAAQFFFFVGFATVECYLLASMAYDRHAAVCRPLHYTTTMTTGVCTILTIGSYTCGFLNASIHAADTFKLSFCGSNKINHFFCDIPPLLALACSSTHISKLVVFFVVGFNVFFTLLVIIISYFFIYIAIQNMKSSEGRKKAFSTCASHLTAVSIFYGTIIFMYLQPSSGQSMDTDKIASVFYTVVIPMLNPLIYSLRNREVKSALWKILNRFYPASFSVSRK.

Residues 1–26 are Extracellular-facing; sequence MTSMENITEVTEFILLGLTDDPNLQV. Asparagine 6 carries an N-linked (GlcNAc...) asparagine glycan. The chain crosses the membrane as a helical span at residues 27–47; it reads PLLLIFLFIYLVTLIGNGGMM. Topologically, residues 48–55 are cytoplasmic; it reads VIIFSDSH. Residues 56–76 form a helical membrane-spanning segment; the sequence is LHTPMYFFLSNLSFVDLGYSS. The Extracellular segment spans residues 77–100; it reads AVAPKMVAALQSGNKVISYNGCAA. An intrachain disulfide couples cysteine 98 to cysteine 190. Residues 101 to 121 form a helical membrane-spanning segment; the sequence is QFFFFVGFATVECYLLASMAY. Topologically, residues 122–134 are cytoplasmic; the sequence is DRHAAVCRPLHYT. The chain crosses the membrane as a helical span at residues 135–155; it reads TTMTTGVCTILTIGSYTCGFL. Residues 156–197 lie on the Extracellular side of the membrane; that stretch reads NASIHAADTFKLSFCGSNKINHFFCDIPPLLALACSSTHISK. A helical membrane pass occupies residues 198 to 218; sequence LVVFFVVGFNVFFTLLVIIIS. The Cytoplasmic segment spans residues 219-238; sequence YFFIYIAIQNMKSSEGRKKA. Residues 239–259 form a helical membrane-spanning segment; that stretch reads FSTCASHLTAVSIFYGTIIFM. Topologically, residues 260-272 are extracellular; the sequence is YLQPSSGQSMDTD. The chain crosses the membrane as a helical span at residues 273–293; sequence KIASVFYTVVIPMLNPLIYSL. The Cytoplasmic portion of the chain corresponds to 294 to 319; it reads RNREVKSALWKILNRFYPASFSVSRK.

It belongs to the G-protein coupled receptor 1 family.

It is found in the cell membrane. In terms of biological role, odorant receptor. The protein is Olfactory receptor 5B21 of Mus musculus (Mouse).